Reading from the N-terminus, the 178-residue chain is ATP synthase subunit delta (178 aa).

This sequence belongs to the ATPase delta chain family. F-type ATPases have 2 components, F(1) - the catalytic core - and F(0) - the membrane proton channel. F(1) has five subunits: alpha(3), beta(3), gamma(1), delta(1), epsilon(1). F(0) has three main subunits: a(1), b(2) and c(10-14). The alpha and beta chains form an alternating ring which encloses part of the gamma chain. F(1) is attached to F(0) by a central stalk formed by the gamma and epsilon chains, while a peripheral stalk is formed by the delta and b chains.

It is found in the cell membrane. F(1)F(0) ATP synthase produces ATP from ADP in the presence of a proton or sodium gradient. F-type ATPases consist of two structural domains, F(1) containing the extramembraneous catalytic core and F(0) containing the membrane proton channel, linked together by a central stalk and a peripheral stalk. During catalysis, ATP synthesis in the catalytic domain of F(1) is coupled via a rotary mechanism of the central stalk subunits to proton translocation. Functionally, this protein is part of the stalk that links CF(0) to CF(1). It either transmits conformational changes from CF(0) to CF(1) or is implicated in proton conduction. This chain is ATP synthase subunit delta, found in Geobacillus stearothermophilus (Bacillus stearothermophilus).